Reading from the N-terminus, the 640-residue chain is Kelch-like protein 17 (640 aa).

The tract at residues 1–50 is disordered; that stretch reads MQPRGERPAGRTQSPEHSSPGPGPEAPPPPQPPAPEAERARPRQARPAAP. Positions 21-35 are enriched in pro residues; that stretch reads GPGPEAPPPPQPPAP. The region spanning 90–157 is the BTB domain; the sequence is CDIVLHVAAK…AYTAEIVVGE (68 aa). The 103-residue stretch at 192 to 294 folds into the BACK domain; sequence CLGIRGFADT…SRDFLLGHVD (103 aa). Residues 287–639 are interaction with F-actin; it reads DFLLGHVDAE…SPTLSVSSTS (353 aa). 6 Kelch repeats span residues 341–387, 388–434, 436–481, 482–528, 530–575, and 576–622; these read VLFA…AVGN, RLYA…ALHG, LYAA…TLDG, NLYA…VLEG, LYVA…AMDG, and WLYA…VLEL. The segment at 638–640 is interaction with PDZK1; that stretch reads TSL.

As to quaternary structure, interacts with F-actin; the interaction disrupts the F-actin structures and leads to marked changes of neuronal morphology. Component of a complex, composed of PDZK1, SYNGAP1, KLHL17 and NMDA receptors. Interacts directly with PDZK1 (via PDZ1 domain); the interaction is important for integrity of actin cytoskeleton structures in neurons. Interacts with DLG4 and SYNGAP1. Interacts (via kelch repeats) with GRIK2 (via C-terminus); the interaction targets GRIK2 for degradation via ubiquitin-proteasome pathway. Interacts with GRIK1. Interacts with (via BTB domain) CUL3; the interaction regulates surface GRIK2 expression.

The protein localises to the postsynaptic density. It is found in the synapse. It participates in protein modification; protein ubiquitination. Functionally, substrate-recognition component of some cullin-RING-based BCR (BTB-CUL3-RBX1) E3 ubiquitin-protein ligase complexes. The BCR(KLHL17) complex mediates the ubiquitination and subsequent degradation of GLUR6. May play a role in the actin-based neuronal function. The protein is Kelch-like protein 17 (Klhl17) of Mus musculus (Mouse).